A 514-amino-acid chain; its full sequence is Peptide chain release factor 3 (514 aa).

In terms of domain architecture, tr-type G spans 8-268 (KKRRTFAIIS…TFLEFAPEPH (261 aa)). GTP is bound by residues 17–24 (SHPDAGKT), 85–89 (DTPGH), and 139–142 (NKLD).

Belongs to the TRAFAC class translation factor GTPase superfamily. Classic translation factor GTPase family. PrfC subfamily.

Its subcellular location is the cytoplasm. In terms of biological role, increases the formation of ribosomal termination complexes and stimulates activities of RF-1 and RF-2. It binds guanine nucleotides and has strong preference for UGA stop codons. It may interact directly with the ribosome. The stimulation of RF-1 and RF-2 is significantly reduced by GTP and GDP, but not by GMP. The sequence is that of Peptide chain release factor 3 from Streptococcus pyogenes serotype M49 (strain NZ131).